A 345-amino-acid polypeptide reads, in one-letter code: Anthranilate phosphoribosyltransferase (345 aa).

Residues Gly-84, 87–88 (GD), Thr-92, 94–97 (NVTT), 112–120 (KHGNRSVSS), and Ser-124 contribute to the 5-phospho-alpha-D-ribose 1-diphosphate site. Gly-84 contributes to the anthranilate binding site. Residue Thr-96 participates in Mg(2+) binding. An anthranilate-binding site is contributed by Asn-115. Arg-170 provides a ligand contact to anthranilate. Positions 228 and 229 each coordinate Mg(2+).

This sequence belongs to the anthranilate phosphoribosyltransferase family. Homodimer. Mg(2+) is required as a cofactor.

The catalysed reaction is N-(5-phospho-beta-D-ribosyl)anthranilate + diphosphate = 5-phospho-alpha-D-ribose 1-diphosphate + anthranilate. It participates in amino-acid biosynthesis; L-tryptophan biosynthesis; L-tryptophan from chorismate: step 2/5. Catalyzes the transfer of the phosphoribosyl group of 5-phosphorylribose-1-pyrophosphate (PRPP) to anthranilate to yield N-(5'-phosphoribosyl)-anthranilate (PRA). The sequence is that of Anthranilate phosphoribosyltransferase from Corynebacterium aurimucosum (strain ATCC 700975 / DSM 44827 / CIP 107346 / CN-1) (Corynebacterium nigricans).